We begin with the raw amino-acid sequence, 184 residues long: Photosystem I assembly protein Ycf4 (184 aa).

2 helical membrane passes run 22 to 42 (FCWA…GTSS) and 57 to 77 (ILFF…LFIS).

The protein belongs to the Ycf4 family.

It is found in the plastid. Its subcellular location is the chloroplast thylakoid membrane. Seems to be required for the assembly of the photosystem I complex. The polypeptide is Photosystem I assembly protein Ycf4 (Chloranthus spicatus (Chulantree)).